The primary structure comprises 570 residues: Protein misato homolog 1 (570 aa).

Phosphoserine is present on Ser495.

Belongs to the misato family.

The protein localises to the mitochondrion outer membrane. It is found in the cytoplasm. In terms of biological role, involved in the regulation of mitochondrial distribution and morphology. Required for mitochondrial fusion and mitochondrial network formation. The polypeptide is Protein misato homolog 1 (MSTO1) (Pongo pygmaeus (Bornean orangutan)).